The following is a 504-amino-acid chain: Probable cytosol aminopeptidase (504 aa).

Residues lysine 268 and aspartate 273 each coordinate Mn(2+). Lysine 280 is a catalytic residue. Residues aspartate 291, aspartate 350, and glutamate 352 each contribute to the Mn(2+) site. Arginine 354 is an active-site residue.

It belongs to the peptidase M17 family. Mn(2+) serves as cofactor.

It is found in the cytoplasm. It carries out the reaction Release of an N-terminal amino acid, Xaa-|-Yaa-, in which Xaa is preferably Leu, but may be other amino acids including Pro although not Arg or Lys, and Yaa may be Pro. Amino acid amides and methyl esters are also readily hydrolyzed, but rates on arylamides are exceedingly low.. The catalysed reaction is Release of an N-terminal amino acid, preferentially leucine, but not glutamic or aspartic acids.. Its function is as follows. Presumably involved in the processing and regular turnover of intracellular proteins. Catalyzes the removal of unsubstituted N-terminal amino acids from various peptides. The protein is Probable cytosol aminopeptidase of Psychromonas ingrahamii (strain DSM 17664 / CCUG 51855 / 37).